A 244-amino-acid chain; its full sequence is Protein-L-isoaspartate O-methyltransferase (244 aa).

The segment at Met-1 to Glu-39 is disordered. Ser-92 is an active-site residue.

It belongs to the methyltransferase superfamily. L-isoaspartyl/D-aspartyl protein methyltransferase family.

Its subcellular location is the cytoplasm. The enzyme catalyses [protein]-L-isoaspartate + S-adenosyl-L-methionine = [protein]-L-isoaspartate alpha-methyl ester + S-adenosyl-L-homocysteine. In terms of biological role, catalyzes the methyl esterification of L-isoaspartyl residues in peptides and proteins that result from spontaneous decomposition of normal L-aspartyl and L-asparaginyl residues. It plays a role in the repair and/or degradation of damaged proteins. In Synechococcus sp. (strain JA-2-3B'a(2-13)) (Cyanobacteria bacterium Yellowstone B-Prime), this protein is Protein-L-isoaspartate O-methyltransferase.